The chain runs to 539 residues: NADH-quinone oxidoreductase subunit N 2 (539 aa).

13 consecutive transmembrane segments (helical) span residues 11–31, 52–72, 106–126, 141–161, 193–213, 248–268, 296–316, 329–349, 357–377, 385–405, 429–449, 462–484, and 500–520; these read LIPE…DVLT, LMGL…FSWM, PLTH…VILT, LILF…LIMI, YIFG…LLGL, GVAI…VAIV, AGFF…SILG, WTSL…LAAL, MLAY…VGTQ, LMYL…LALV, LLLT…GFFV, AKWL…LRFL, and VGFG…GLGI.

This sequence belongs to the complex I subunit 2 family. In terms of assembly, NDH-1 is composed of 14 different subunits. Subunits NuoA, H, J, K, L, M, N constitute the membrane sector of the complex.

The protein resides in the cell membrane. It carries out the reaction a quinone + NADH + 5 H(+)(in) = a quinol + NAD(+) + 4 H(+)(out). NDH-1 shuttles electrons from NADH, via FMN and iron-sulfur (Fe-S) centers, to quinones in the respiratory chain. The immediate electron acceptor for the enzyme in this species is believed to be ubiquinone. Couples the redox reaction to proton translocation (for every two electrons transferred, four hydrogen ions are translocated across the cytoplasmic membrane), and thus conserves the redox energy in a proton gradient. The protein is NADH-quinone oxidoreductase subunit N 2 of Herpetosiphon aurantiacus (strain ATCC 23779 / DSM 785 / 114-95).